Consider the following 216-residue polypeptide: FMN-dependent NADH:quinone oxidoreductase 2 (216 aa).

Residues Ser9, 15–17 (SVS), 96–99 (MYNF), and 140–143 (SRGG) contribute to the FMN site.

It belongs to the azoreductase type 1 family. As to quaternary structure, homodimer. The cofactor is FMN.

The enzyme catalyses 2 a quinone + NADH + H(+) = 2 a 1,4-benzosemiquinone + NAD(+). The catalysed reaction is N,N-dimethyl-1,4-phenylenediamine + anthranilate + 2 NAD(+) = 2-(4-dimethylaminophenyl)diazenylbenzoate + 2 NADH + 2 H(+). Functionally, quinone reductase that provides resistance to thiol-specific stress caused by electrophilic quinones. Also exhibits azoreductase activity. Catalyzes the reductive cleavage of the azo bond in aromatic azo compounds to the corresponding amines. The sequence is that of FMN-dependent NADH:quinone oxidoreductase 2 from Xanthomonas euvesicatoria pv. vesicatoria (strain 85-10) (Xanthomonas campestris pv. vesicatoria).